A 477-amino-acid polypeptide reads, in one-letter code: Methylenetetrahydrofolate--tRNA-(uracil-5-)-methyltransferase TrmFO (477 aa).

FAD is bound at residue Gly14 to Gly19.

The protein belongs to the MnmG family. TrmFO subfamily. It depends on FAD as a cofactor.

The protein localises to the cytoplasm. The enzyme catalyses uridine(54) in tRNA + (6R)-5,10-methylene-5,6,7,8-tetrahydrofolate + NADH + H(+) = 5-methyluridine(54) in tRNA + (6S)-5,6,7,8-tetrahydrofolate + NAD(+). The catalysed reaction is uridine(54) in tRNA + (6R)-5,10-methylene-5,6,7,8-tetrahydrofolate + NADPH + H(+) = 5-methyluridine(54) in tRNA + (6S)-5,6,7,8-tetrahydrofolate + NADP(+). Functionally, catalyzes the folate-dependent formation of 5-methyl-uridine at position 54 (M-5-U54) in all tRNAs. The sequence is that of Methylenetetrahydrofolate--tRNA-(uracil-5-)-methyltransferase TrmFO from Rhizobium etli (strain ATCC 51251 / DSM 11541 / JCM 21823 / NBRC 15573 / CFN 42).